Consider the following 732-residue polypeptide: Photosystem I P700 chlorophyll a apoprotein A2 (732 aa).

The next 8 membrane-spanning stretches (helical) occupy residues 46–69 (IFAS…FHVA), 133–156 (LYTG…LHIQ), 173–197 (LNHH…HVAI), 271–289 (MAHH…GHMY), 328–351 (LHFQ…QHMY), 367–393 (SALY…IFFI), 415–437 (AVIS…LYVH), and 515–533 (FLVH…LILV). [4Fe-4S] cluster is bound by residues cysteine 557 and cysteine 566. 2 consecutive transmembrane segments (helical) span residues 573–594 (AFYL…YWHW) and 641–663 (LAVW…MFLI). Histidine 652, methionine 660, and tyrosine 668 together coordinate chlorophyll a. Tryptophan 669 is a binding site for phylloquinone. The chain crosses the membrane as a helical span at residues 705–725 (LVGLVHFTVGYILTYAAFVIA).

It belongs to the PsaA/PsaB family. The PsaA/B heterodimer binds the P700 chlorophyll special pair and subsequent electron acceptors. PSI consists of a core antenna complex that captures photons, and an electron transfer chain that converts photonic excitation into a charge separation. The eukaryotic PSI reaction center is composed of at least 11 subunits. It depends on P700 is a chlorophyll a/chlorophyll a' dimer, A0 is one or more chlorophyll a, A1 is one or both phylloquinones and FX is a shared 4Fe-4S iron-sulfur center. as a cofactor.

It is found in the plastid. Its subcellular location is the chloroplast thylakoid membrane. The catalysed reaction is reduced [plastocyanin] + hnu + oxidized [2Fe-2S]-[ferredoxin] = oxidized [plastocyanin] + reduced [2Fe-2S]-[ferredoxin]. Functionally, psaA and PsaB bind P700, the primary electron donor of photosystem I (PSI), as well as the electron acceptors A0, A1 and FX. PSI is a plastocyanin/cytochrome c6-ferredoxin oxidoreductase, converting photonic excitation into a charge separation, which transfers an electron from the donor P700 chlorophyll pair to the spectroscopically characterized acceptors A0, A1, FX, FA and FB in turn. Oxidized P700 is reduced on the lumenal side of the thylakoid membrane by plastocyanin or cytochrome c6. The chain is Photosystem I P700 chlorophyll a apoprotein A2 from Cyanidioschyzon merolae (strain NIES-3377 / 10D) (Unicellular red alga).